We begin with the raw amino-acid sequence, 234 residues long: Large ribosomal subunit protein uL1 (234 aa).

This sequence belongs to the universal ribosomal protein uL1 family. Part of the 50S ribosomal subunit.

Binds directly to 23S rRNA. The L1 stalk is quite mobile in the ribosome, and is involved in E site tRNA release. In terms of biological role, protein L1 is also a translational repressor protein, it controls the translation of the L11 operon by binding to its mRNA. The sequence is that of Large ribosomal subunit protein uL1 from Helicobacter hepaticus (strain ATCC 51449 / 3B1).